The sequence spans 742 residues: 5-methyltetrahydropteroyltriglutamate--homocysteine methyltransferase (742 aa).

5-methyltetrahydropteroyltri-L-glutamate contacts are provided by residues 18–21 (REWK) and K112. L-homocysteine-binding positions include 420 to 422 (IGS) and E473. Residues 420–422 (IGS) and E473 contribute to the L-methionine site. W550 serves as a coordination point for 5-methyltetrahydropteroyltri-L-glutamate. D588 is a binding site for L-homocysteine. D588 lines the L-methionine pocket. A 5-methyltetrahydropteroyltri-L-glutamate-binding site is contributed by E594. Zn(2+)-binding residues include H630, C632, and E654. The active-site Proton donor is H683. Zn(2+) is bound at residue C715.

The protein belongs to the vitamin-B12 independent methionine synthase family. Requires Zn(2+) as cofactor.

It carries out the reaction 5-methyltetrahydropteroyltri-L-glutamate + L-homocysteine = tetrahydropteroyltri-L-glutamate + L-methionine. The protein operates within amino-acid biosynthesis; L-methionine biosynthesis via de novo pathway; L-methionine from L-homocysteine (MetE route): step 1/1. In terms of biological role, catalyzes the transfer of a methyl group from 5-methyltetrahydrofolate to homocysteine resulting in methionine formation. The protein is 5-methyltetrahydropteroyltriglutamate--homocysteine methyltransferase of Staphylococcus aureus (strain bovine RF122 / ET3-1).